The sequence spans 614 residues: Leucine-rich repeat protein soc-2 homolog (614 aa).

Disordered stretches follow at residues 1–29 (MNLC…SSGP) and 44–79 (NSGG…PNLT). 20 LRR repeats span residues 134–155 (GIKR…VREC), 157–178 (HLTE…IGCL), 180–201 (NLRN…LKHC), 203–224 (QLKV…IYRL), 226–247 (SLTT…LRQL), 249–270 (NLTM…IGAL), 272–293 (NLTT…IGNC), 295–316 (NLSA…IGNL), 318–340 (SLVR…KNCK), 341–362 (SMDE…MLAS), 365–386 (ALTT…GPAQ), 389–410 (NVYS…IFSR), 413–434 (GLTK…VGTW), 436–457 (NMVE…IMNL), 459–480 (NLEI…IGNL), 482–503 (KLRI…IGLL), 505–526 (ELQR…IGHL), 528–549 (NLTH…IGSL), 551–573 (SLEN…LALC), and 575–596 (NLKY…IQAG).

This sequence belongs to the SHOC2 family.

In terms of biological role, acts as a Ras effector and participates in MAPK pathway activation. Probably acts as a regulatory subunit of protein phosphatase that specifically dephosphorylates Raf kinase and stimulate Raf activity at specialized signaling complexes upon Ras activation. The protein is Leucine-rich repeat protein soc-2 homolog (Sur-8) of Drosophila virilis (Fruit fly).